Here is an 81-residue protein sequence, read N- to C-terminus: Short neurotoxin 2 (81 aa).

An N-terminal signal peptide occupies residues 1 to 21 (MKTLLLTLVVVTIVCLDLGYT). 4 disulfide bridges follow: C24-C43, C38-C60, C62-C73, and C74-C79.

It belongs to the three-finger toxin family. Short-chain subfamily. Type I alpha-neurotoxin sub-subfamily. Expressed by the venom gland.

The protein localises to the secreted. Functionally, binds to muscle nicotinic acetylcholine receptor (nAChR) and inhibit acetylcholine from binding to the receptor, thereby impairing neuromuscular transmission. The chain is Short neurotoxin 2 from Drysdalia coronoides (White-lipped snake).